The sequence spans 580 residues: 2-succinyl-5-enolpyruvyl-6-hydroxy-3-cyclohexene-1-carboxylate synthase (580 aa).

It belongs to the TPP enzyme family. MenD subfamily. Homodimer. It depends on Mg(2+) as a cofactor. The cofactor is Mn(2+). Thiamine diphosphate serves as cofactor.

The enzyme catalyses isochorismate + 2-oxoglutarate + H(+) = 5-enolpyruvoyl-6-hydroxy-2-succinyl-cyclohex-3-ene-1-carboxylate + CO2. It participates in quinol/quinone metabolism; 1,4-dihydroxy-2-naphthoate biosynthesis; 1,4-dihydroxy-2-naphthoate from chorismate: step 2/7. It functions in the pathway quinol/quinone metabolism; menaquinone biosynthesis. Catalyzes the thiamine diphosphate-dependent decarboxylation of 2-oxoglutarate and the subsequent addition of the resulting succinic semialdehyde-thiamine pyrophosphate anion to isochorismate to yield 2-succinyl-5-enolpyruvyl-6-hydroxy-3-cyclohexene-1-carboxylate (SEPHCHC). The chain is 2-succinyl-5-enolpyruvyl-6-hydroxy-3-cyclohexene-1-carboxylate synthase from Listeria welshimeri serovar 6b (strain ATCC 35897 / DSM 20650 / CCUG 15529 / CIP 8149 / NCTC 11857 / SLCC 5334 / V8).